Reading from the N-terminus, the 601-residue chain is Methionine--tRNA ligase (601 aa).

The 'HIGH' region signature appears at 21 to 31; it reads PYANGPRHIGH. Cys153, Cys156, Cys166, and Cys169 together coordinate Zn(2+). Asn361 is an ATP binding site.

This sequence belongs to the class-I aminoacyl-tRNA synthetase family. MetG type 1 subfamily. As to quaternary structure, monomer. Zn(2+) serves as cofactor.

The protein localises to the cytoplasm. The enzyme catalyses tRNA(Met) + L-methionine + ATP = L-methionyl-tRNA(Met) + AMP + diphosphate. Is required not only for elongation of protein synthesis but also for the initiation of all mRNA translation through initiator tRNA(fMet) aminoacylation. This chain is Methionine--tRNA ligase, found in Cutibacterium acnes (strain DSM 16379 / KPA171202) (Propionibacterium acnes).